The primary structure comprises 1193 residues: Protein diaphanous homolog 3 (1193 aa).

Residues methionine 1–histidine 10 are compositionally biased toward basic residues. The segment at methionine 1 to arginine 57 is disordered. Serine 26 carries the post-translational modification Phosphoserine. Residues proline 36–phenylalanine 60 carry the Nuclear localization signal motif. Threonine 68 is subject to Phosphothreonine. 2 positions are modified to phosphoserine: serine 77 and serine 175. A GBD/FH3 domain is found at proline 114–aspartate 476. Positions isoleucine 497 to leucine 554 form a coiled coil. The disordered stretch occupies residues cysteine 558–glutamine 622. The FH1 domain occupies proline 561 to proline 631. The span at leucine 575–proline 600 shows a compositional bias: pro residues. Phosphoserine is present on serine 624. In terms of domain architecture, FH2 spans proline 636–leucine 1034. Residues lysine 1013–glycine 1056 are a coiled coil. Positions aspartate 1057–aspartate 1087 constitute a DAD domain. A phosphoserine mark is found at serine 1093 and serine 1179. A Nuclear export signal motif is present at residues glutamate 1184–leucine 1193.

This sequence belongs to the formin homology family. Diaphanous subfamily. In terms of processing, ubiquitinated.

It localises to the cytoplasm. It is found in the nucleus. In terms of biological role, actin nucleation and elongation factor required for the assembly of F-actin structures, such as actin cables and stress fibers. Required for cytokinesis, stress fiber formation and transcriptional activation of the serum response factor. Binds to GTP-bound form of Rho and to profilin: acts in a Rho-dependent manner to recruit profilin to the membrane, where it promotes actin polymerization. DFR proteins couple Rho and Src tyrosine kinase during signaling and the regulation of actin dynamics. Also acts as an actin nucleation and elongation factor in the nucleus by promoting nuclear actin polymerization inside the nucleus to drive serum-dependent SRF-MRTFA activity. This chain is Protein diaphanous homolog 3 (DIAPH3), found in Homo sapiens (Human).